We begin with the raw amino-acid sequence, 93 residues long: UPF0358 protein lin1058 (93 aa).

This sequence belongs to the UPF0358 family.

This chain is UPF0358 protein lin1058, found in Listeria innocua serovar 6a (strain ATCC BAA-680 / CLIP 11262).